We begin with the raw amino-acid sequence, 609 residues long: Alpha-glycerophosphate oxidase (609 aa).

Position 21–49 (21–49 (DVLIIGGGITGAGVAVQTAAAGMKTVLLE)) interacts with FAD.

FAD is required as a cofactor.

It is found in the cytoplasm. The enzyme catalyses sn-glycerol 3-phosphate + O2 = dihydroxyacetone phosphate + H2O2. It functions in the pathway membrane lipid metabolism; glycerophospholipid metabolism. The sequence is that of Alpha-glycerophosphate oxidase (glpO) from Enterococcus casseliflavus (Enterococcus flavescens).